Consider the following 393-residue polypeptide: Nuclear speckle splicing regulatory protein 1 homolog (393 aa).

The disordered stretch occupies residues 1–49; the sequence is MSAPPKRFGLIVKQKEEPKRAPVRVSSVFGDDDDDEAPATATNTSSASV. Residues 39–48 are compositionally biased toward low complexity; it reads ATATNTSSAS. The stretch at 76–166 forms a coiled coil; sequence NYDEIQAIKN…YREQEAEEAA (91 aa). The tract at residues 187 to 350 is disordered; sequence LLNDLARDPT…SLKDKLKPKR (164 aa). Basic residues predominate over residues 199-209; it reads KQRKMEKKNVR. 4 stretches are compositionally biased toward basic and acidic residues: residues 222–236, 243–261, 317–333, and 341–350; these read EDVK…KSIY, DEKK…EGEL, DHAQ…KSPE, and SLKDKLKPKR.

The protein belongs to the NSRP1 family.

The polypeptide is Nuclear speckle splicing regulatory protein 1 homolog (Caenorhabditis briggsae).